The primary structure comprises 151 residues: FUN14 domain-containing protein 2 (151 aa).

At 1-42 (MAANSQGNFDGKFEALDLAELTKKQPWWRKLFGQESGPSAEK) the chain is on the cytoplasmic side. Residues 43–63 (YSVATQLVIGGVTGWCTGFVF) traverse the membrane as a helical segment. At 64–69 (QKVGKL) the chain is on the mitochondrial intermembrane side. Residues 70-90 (AATAVGGGFFLLQLANHTGYI) traverse the membrane as a helical segment. Residues 91-126 (KVDWQRVEKDMKKAKEQLKIRKNKQIPTEVKSKAEE) lie on the Cytoplasmic side of the membrane. The chain crosses the membrane as a helical span at residues 127-147 (VVSFVKKNVLVTGGFFGGFLL). At 148–151 (GMAS) the chain is on the mitochondrial intermembrane side.

The protein belongs to the FUN14 family. Highly expressed in platelet (at protein level). Expressed in liver, brain, heart and muscle.

It is found in the mitochondrion outer membrane. It localises to the nucleus. In terms of biological role, binds directly and specifically 1,2-Diacyl-sn-glycero-3-phospho-(1'-myo-inositol-3',4',5'-bisphosphate) (PIP3) leading to the recruitment of PIP3 to mitochondria and may play a role in the regulation of the platelet activation via AKT/GSK3B/cGMP signaling pathways. May act as transcription factor that regulates SREBP1 (isoform SREBP-1C) expression in order to modulate triglyceride (TG) homeostasis in hepatocytes. This chain is FUN14 domain-containing protein 2, found in Mus musculus (Mouse).